Here is a 411-residue protein sequence, read N- to C-terminus: Arginine biosynthesis bifunctional protein ArgJ (411 aa).

Substrate is bound by residues T160, K186, T197, E283, N406, and T411. Catalysis depends on T197, which acts as the Nucleophile.

Belongs to the ArgJ family. As to quaternary structure, heterotetramer of two alpha and two beta chains.

Its subcellular location is the cytoplasm. The catalysed reaction is N(2)-acetyl-L-ornithine + L-glutamate = N-acetyl-L-glutamate + L-ornithine. The enzyme catalyses L-glutamate + acetyl-CoA = N-acetyl-L-glutamate + CoA + H(+). Its pathway is amino-acid biosynthesis; L-arginine biosynthesis; L-ornithine and N-acetyl-L-glutamate from L-glutamate and N(2)-acetyl-L-ornithine (cyclic): step 1/1. It participates in amino-acid biosynthesis; L-arginine biosynthesis; N(2)-acetyl-L-ornithine from L-glutamate: step 1/4. Its activity is regulated as follows. Feedback inhibition by L-ornithine. Functionally, catalyzes two activities which are involved in the cyclic version of arginine biosynthesis: the synthesis of N-acetylglutamate from glutamate and acetyl-CoA as the acetyl donor, and of ornithine by transacetylation between N(2)-acetylornithine and glutamate. In Halalkalibacterium halodurans (strain ATCC BAA-125 / DSM 18197 / FERM 7344 / JCM 9153 / C-125) (Bacillus halodurans), this protein is Arginine biosynthesis bifunctional protein ArgJ.